The sequence spans 244 residues: Probable transcriptional regulatory protein Dgeo_2194 (244 aa).

A disordered region spans residues 1 to 21 (MAGHSKWAQIKRKKGANDKKR).

The protein belongs to the TACO1 family.

Its subcellular location is the cytoplasm. This Deinococcus geothermalis (strain DSM 11300 / CIP 105573 / AG-3a) protein is Probable transcriptional regulatory protein Dgeo_2194.